The following is a 556-amino-acid chain: Formate--tetrahydrofolate ligase (556 aa).

Threonine 65–serine 72 is an ATP binding site.

This sequence belongs to the formate--tetrahydrofolate ligase family.

The catalysed reaction is (6S)-5,6,7,8-tetrahydrofolate + formate + ATP = (6R)-10-formyltetrahydrofolate + ADP + phosphate. It functions in the pathway one-carbon metabolism; tetrahydrofolate interconversion. In Clostridium acetobutylicum (strain ATCC 824 / DSM 792 / JCM 1419 / IAM 19013 / LMG 5710 / NBRC 13948 / NRRL B-527 / VKM B-1787 / 2291 / W), this protein is Formate--tetrahydrofolate ligase.